The sequence spans 552 residues: 5'-AMP-activated protein kinase catalytic subunit alpha-2 (552 aa).

The 253-residue stretch at 16-268 folds into the Protein kinase domain; that stretch reads YVLGDTLGVG…IKDIREHEWF (253 aa). Residues 22–30 and Lys45 contribute to the ATP site; that span reads LGVGTFGKV. Asp139 functions as the Proton acceptor in the catalytic mechanism. The residue at position 172 (Thr172) is a Phosphothreonine; by LKB1 and CaMKK2. The residue at position 258 (Thr258) is a Phosphothreonine. Residues 291-376 are AIS; that stretch reads EAVKEVCEKF…PERMPPLIAD (86 aa). Phosphoserine is present on residues Ser377 and Ser491.

Belongs to the protein kinase superfamily. CAMK Ser/Thr protein kinase family. SNF1 subfamily. AMPK is a heterotrimer of an alpha catalytic subunit (PRKAA1 or PRKAA2), a beta (PRKAB1 or PRKAB2) and a gamma non-catalytic subunits (PRKAG1, PRKAG2 or PRKAG3). Interacts with FNIP1 and FNIP2. Interacts with DUSP29. Interacts with ARF6. The phosphorylated form at Thr-172 mediated by CamKK2 interacts with ACSS2. The cofactor is Mg(2+). In terms of processing, ubiquitinated. Post-translationally, phosphorylated at Thr-172 by STK11/LKB1 in complex with STE20-related adapter-alpha (STRADA) pseudo kinase and CAB39. Also phosphorylated at Thr-172 by CAMKK2; triggered by a rise in intracellular calcium ions, without detectable changes in the AMP/ATP ratio. CAMKK1 can also phosphorylate Thr-172, but at much lower level. Dephosphorylated by protein phosphatase 2A and 2C (PP2A and PP2C). Phosphorylated by ULK1; leading to negatively regulate AMPK activity and suggesting the existence of a regulatory feedback loop between ULK1 and AMPK. Dephosphorylated by PPM1A and PPM1B at Thr-172 (mediated by STK11/LKB1).

Its subcellular location is the cytoplasm. It localises to the nucleus. It catalyses the reaction L-seryl-[protein] + ATP = O-phospho-L-seryl-[protein] + ADP + H(+). The enzyme catalyses L-threonyl-[protein] + ATP = O-phospho-L-threonyl-[protein] + ADP + H(+). It carries out the reaction L-seryl-[acetyl-CoA carboxylase] + ATP = O-phospho-L-seryl-[acetyl-CoA carboxylase] + ADP + H(+). The catalysed reaction is L-seryl-[3-hydroxy-3-methylglutaryl-coenzyme A reductase] + ATP = O-phospho-L-seryl-[3-hydroxy-3-methylglutaryl-coenzyme A reductase] + ADP + H(+). With respect to regulation, activated by phosphorylation on Thr-172. Binding of AMP to non-catalytic gamma subunit (PRKAG1, PRKAG2 or PRKAG3) results in allosteric activation, inducing phosphorylation on Thr-172. AMP-binding to gamma subunit also sustains activity by preventing dephosphorylation of Thr-172. ADP also stimulates Thr-172 phosphorylation, without stimulating already phosphorylated AMPK. ATP promotes dephosphorylation of Thr-172, rendering the enzyme inactive. Under physiological conditions AMPK mainly exists in its inactive form in complex with ATP, which is much more abundant than AMP. Selectively inhibited by compound C (6-[4-(2-Piperidin-1-yl-ethoxy)-phenyl)]-3-pyridin-4-yl-pyyrazolo[1,5-a] pyrimidine. Activated by resveratrol, a natural polyphenol present in red wine, and S17834, a synthetic polyphenol. Salicylate/aspirin directly activates kinase activity, primarily by inhibiting Thr-172 dephosphorylation. In terms of biological role, catalytic subunit of AMP-activated protein kinase (AMPK), an energy sensor protein kinase that plays a key role in regulating cellular energy metabolism. In response to reduction of intracellular ATP levels, AMPK activates energy-producing pathways and inhibits energy-consuming processes: inhibits protein, carbohydrate and lipid biosynthesis, as well as cell growth and proliferation. AMPK acts via direct phosphorylation of metabolic enzymes, and by longer-term effects via phosphorylation of transcription regulators. Regulates lipid synthesis by phosphorylating and inactivating lipid metabolic enzymes such as ACACA, ACACB, GYS1, HMGCR and LIPE; regulates fatty acid and cholesterol synthesis by phosphorylating acetyl-CoA carboxylase (ACACA and ACACB) and hormone-sensitive lipase (LIPE) enzymes, respectively. Promotes lipolysis of lipid droplets by mediating phosphorylation of isoform 1 of CHKA (CHKalpha2). Regulates insulin-signaling and glycolysis by phosphorylating IRS1, PFKFB2 and PFKFB3. Involved in insulin receptor/INSR internalization. AMPK stimulates glucose uptake in muscle by increasing the translocation of the glucose transporter SLC2A4/GLUT4 to the plasma membrane, possibly by mediating phosphorylation of TBC1D4/AS160. Regulates transcription and chromatin structure by phosphorylating transcription regulators involved in energy metabolism such as CRTC2/TORC2, FOXO3, histone H2B, HDAC5, MEF2C, MLXIPL/ChREBP, EP300, HNF4A, p53/TP53, SREBF1, SREBF2 and PPARGC1A. Acts as a key regulator of glucose homeostasis in liver by phosphorylating CRTC2/TORC2, leading to CRTC2/TORC2 sequestration in the cytoplasm. In response to stress, phosphorylates 'Ser-36' of histone H2B (H2BS36ph), leading to promote transcription. Acts as a key regulator of cell growth and proliferation by phosphorylating FNIP1, TSC2, RPTOR, WDR24 and ATG1/ULK1: in response to nutrient limitation, negatively regulates the mTORC1 complex by phosphorylating RPTOR component of the mTORC1 complex and by phosphorylating and activating TSC2. Also phosphorylates and inhibits GATOR2 subunit WDR24 in response to nutrient limitation, leading to suppress glucose-mediated mTORC1 activation. In response to energetic stress, phosphorylates FNIP1, inactivating the non-canonical mTORC1 signaling, thereby promoting nuclear translocation of TFEB and TFE3, and inducing transcription of lysosomal or autophagy genes. In response to nutrient limitation, promotes autophagy by phosphorylating and activating ATG1/ULK1. In that process, it also activates WDR45/WIPI4. Phosphorylates CASP6, thereby preventing its autoprocessing and subsequent activation. AMPK also acts as a regulator of circadian rhythm by mediating phosphorylation of CRY1, leading to destabilize it. May regulate the Wnt signaling pathway by phosphorylating CTNNB1, leading to stabilize it. Also acts as a regulator of cellular polarity by remodeling the actin cytoskeleton; probably by indirectly activating myosin. Also phosphorylates CFTR, EEF2K, KLC1, NOS3 and SLC12A1. Plays an important role in the differential regulation of pro-autophagy (composed of PIK3C3, BECN1, PIK3R4 and UVRAG or ATG14) and non-autophagy (composed of PIK3C3, BECN1 and PIK3R4) complexes, in response to glucose starvation. Can inhibit the non-autophagy complex by phosphorylating PIK3C3 and can activate the pro-autophagy complex by phosphorylating BECN1. Upon glucose starvation, promotes ARF6 activation in a kinase-independent manner leading to cell migration. Upon glucose deprivation mediates the phosphorylation of ACSS2 at 'Ser-659', which exposes the nuclear localization signal of ACSS2, required for its interaction with KPNA1 and nuclear translocation. Upon stress, regulates mitochondrial fragmentation through phosphorylation of MTFR1L. The sequence is that of 5'-AMP-activated protein kinase catalytic subunit alpha-2 from Mus musculus (Mouse).